The sequence spans 209 residues: CASP-like protein 1B1 (209 aa).

The segment covering 1 to 10 (MDLERGDKKP) has biased composition (basic and acidic residues). Residues 1–39 (MDLERGDKKPPPPPPPAPRTAAATTTTTTTPACSGKKRP) form a disordered region. Residues 1 to 49 (MDLERGDKKPPPPPPPAPRTAAATTTTTTTPACSGKKRPPLRDSLVALQ) are Cytoplasmic-facing. Low complexity predominate over residues 19–32 (RTAAATTTTTTTPA). The helical transmembrane segment at 50–70 (PVLLRAAAALAAAAAAAVMAL) threads the bilayer. The Extracellular segment spans residues 71 to 100 (DAQSYTAVVAIVGTRPLTQTFTAKFSDTPA). A helical membrane pass occupies residues 101-121 (FVYFVIANAIAAAYNLLVLLV). Topologically, residues 122–134 (RRRRRTTAGLVVR) are cytoplasmic. Residues 135–155 (MLDMVVMALLATGAAAAASMA) form a helical membrane-spanning segment. The Extracellular portion of the chain corresponds to 156-180 (ELGRNGNARARWNPVCDRFGSFCRR). Residues 181-201 (GGAALAASFVGVALMLALNLL) traverse the membrane as a helical segment. The Cytoplasmic segment spans residues 202 to 209 (SAASGAGC).

It belongs to the Casparian strip membrane proteins (CASP) family. Homodimer and heterodimers.

The protein localises to the cell membrane. The sequence is that of CASP-like protein 1B1 from Zea mays (Maize).